We begin with the raw amino-acid sequence, 544 residues long: Chaperonin GroEL 3 (544 aa).

Residues 30–33 (TLGP), K51, 87–91 (DGTTT), G415, and D495 each bind ATP.

It belongs to the chaperonin (HSP60) family. Forms a cylinder of 14 subunits composed of two heptameric rings stacked back-to-back. Interacts with the co-chaperonin GroES.

Its subcellular location is the cytoplasm. It carries out the reaction ATP + H2O + a folded polypeptide = ADP + phosphate + an unfolded polypeptide.. Functionally, together with its co-chaperonin GroES, plays an essential role in assisting protein folding. The GroEL-GroES system forms a nano-cage that allows encapsulation of the non-native substrate proteins and provides a physical environment optimized to promote and accelerate protein folding. The chain is Chaperonin GroEL 3 from Psychromonas ingrahamii (strain DSM 17664 / CCUG 51855 / 37).